A 453-amino-acid chain; its full sequence is Flap endonuclease 1 (453 aa).

Residues 1–105 (MGIKGLTGLL…SVLAKRFARR (105 aa)) form an N-domain region. Position 34 (Asp34) interacts with Mg(2+). The DNA site is built by Arg47 and Arg71. Asp87, Glu159, Glu161, Asp180, and Asp182 together coordinate Mg(2+). The I-domain stretch occupies residues 123 to 254 (DVDKLARRQV…KTALKLMREH (132 aa)). DNA is bound at residue Glu159. The DNA site is built by Gly232 and Asp234. Mg(2+) is bound at residue Asp234. 2 disordered regions span residues 273-336 (EEIK…VASS) and 409-453 (RLDG…KSKN). The segment covering 320 to 333 (KSPKKKAPAKKKKV) has biased composition (basic residues). The interval 406–414 (QQGRLDGFF) is interaction with PCNA. The segment covering 417-446 (KPKEPAAKDTGKGKGKATKGEKRKAEEKGS) has biased composition (basic and acidic residues).

The protein belongs to the XPG/RAD2 endonuclease family. FEN1 subfamily. As to quaternary structure, interacts with PCNA. Three molecules of FEN1 bind to one PCNA trimer with each molecule binding to one PCNA monomer. PCNA stimulates the nuclease activity without altering cleavage specificity. Mg(2+) serves as cofactor. In terms of processing, phosphorylated. Phosphorylation upon DNA damage induces relocalization to the nuclear plasma.

It is found in the nucleus. Its subcellular location is the nucleolus. The protein localises to the nucleoplasm. The protein resides in the mitochondrion. In terms of biological role, structure-specific nuclease with 5'-flap endonuclease and 5'-3' exonuclease activities involved in DNA replication and repair. During DNA replication, cleaves the 5'-overhanging flap structure that is generated by displacement synthesis when DNA polymerase encounters the 5'-end of a downstream Okazaki fragment. It enters the flap from the 5'-end and then tracks to cleave the flap base, leaving a nick for ligation. Also involved in the long patch base excision repair (LP-BER) pathway, by cleaving within the apurinic/apyrimidinic (AP) site-terminated flap. Acts as a genome stabilization factor that prevents flaps from equilibrating into structures that lead to duplications and deletions. Also possesses 5'-3' exonuclease activity on nicked or gapped double-stranded DNA, and exhibits RNase H activity. Also involved in replication and repair of rDNA and in repairing mitochondrial DNA. This Cryptococcus neoformans var. neoformans serotype D (strain B-3501A) (Filobasidiella neoformans) protein is Flap endonuclease 1.